We begin with the raw amino-acid sequence, 150 residues long: Avidin-related protein 1 (150 aa).

Positions 1 to 24 (MVHATSPLLLLLLLSLALVAPGLS) are cleaved as a signal peptide. The Avidin-like domain occupies 26 to 147 (RKCSLTGKWD…GNNDFTRQRT (122 aa)). Cysteines 28 and 105 form a disulfide. 2 residues coordinate biotin: Asn36 and Ser40. N-linked (GlcNAc...) asparagine glycosylation is present at Asn54. Residues Tyr57, Thr59, and Asp63 each contribute to the biotin site. Residues Asn67 and Asn93 are each glycosylated (N-linked (GlcNAc...) asparagine). Biotin-binding residues include Ser95, Ser99, and Asn140.

Belongs to the avidin/streptavidin family. Homotetramer. Post-translationally, glycosylated.

The protein localises to the secreted. Functionally, forms a strong non-covalent specific complex with biotin. This Gallus gallus (Chicken) protein is Avidin-related protein 1 (AVR1).